Consider the following 129-residue polypeptide: Small ribosomal subunit protein uS11c (129 aa).

The protein belongs to the universal ribosomal protein uS11 family. Part of the 30S ribosomal subunit.

It localises to the plastid. The protein resides in the chloroplast. This chain is Small ribosomal subunit protein uS11c, found in Gracilaria tenuistipitata var. liui (Red alga).